A 322-amino-acid chain; its full sequence is MTVLNTTDKRKADDTVNKLDGKLKQPRLDNFFKTNTSSPALKDTQVLDNKENNSVSKFNKEKWAENLTPAQRKLLQLEIDTLESSWFDALKDEFLKPYFLNLKEFLMKEWQSQRVFPPKEDIYSWSHHTPLHKTKVILLGQDPYHNIGQAHGLCFSVRPGIPCPPSLVNIYKAIKIDYPDFVIPKTGYLVPWADQGILMLNASLTVRAHQAASHSGKGWETFTSAVLQVALNRNRKGLVILAWGTPAAKRLQGLPLKAHYVLRSVHPSPLSAHRGFFECHHFKKTNEWLEEQYGPEKCINWSAVSEQKAKIKSSELESSSTE.

D142 (proton acceptor) is an active-site residue.

The protein belongs to the uracil-DNA glycosylase (UDG) superfamily. UNG family.

It localises to the mitochondrion. It is found in the nucleus. It catalyses the reaction Hydrolyzes single-stranded DNA or mismatched double-stranded DNA and polynucleotides, releasing free uracil.. Excises uracil residues from the DNA which can arise as a result of misincorporation of dUMP residues by DNA polymerase or due to deamination of cytosine. The chain is Uracil-DNA glycosylase (ung1) from Schizosaccharomyces pombe (strain 972 / ATCC 24843) (Fission yeast).